Consider the following 1610-residue polypeptide: E3 ubiquitin-protein ligase listerin (1610 aa).

Residues 1-10 are compositionally biased toward basic and acidic residues; it reads MKKKSTDLYG. The tract at residues 1–20 is disordered; sequence MKKKSTDLYGRKNPGMQSMS. HEAT repeat units lie at residues 110–148, 314–351, 372–408, 409–443, 590–626, 627–664, 736–773, 965–1003, 1119–1156, 1322–1354, 1355–1393, and 1435–1473; these read LKIF…SDRA, VPML…NLIT, IGAM…EVYD, CLLN…RYFK, SPAF…SFDE, LENI…TAVF, KSLY…KALE, GKMP…VVSN, CCFL…MSVV, RVYL…HAMD, LLRP…YSSA, and FTGY…KVNR. The RING-type; atypical zinc-finger motif lies at 1558-1604; sequence CAICYSVLSVERTLPNKRCGTCRHKFHASCLYKWFKSSNSSRCPLCR.

It belongs to the LTN1 family. As to quaternary structure, component of the ribosome quality control complex (RQC), composed of the E3 ubiquitin ligase rkr1/ltn1, rqc1 and mtr1/rqc2, as well as cdc48 and its ubiquitin-binding cofactors. RQC forms a stable complex with 60S ribosomal subunits.

It is found in the nucleus. It localises to the cytoplasm. The protein localises to the cytosol. It carries out the reaction S-ubiquitinyl-[E2 ubiquitin-conjugating enzyme]-L-cysteine + [acceptor protein]-L-lysine = [E2 ubiquitin-conjugating enzyme]-L-cysteine + N(6)-ubiquitinyl-[acceptor protein]-L-lysine.. It functions in the pathway protein modification; protein ubiquitination. Its function is as follows. E3 ubiquitin-protein ligase component of the ribosome quality control complex (RQC), a ribosome-associated complex that mediates ubiquitination and extraction of incompletely synthesized nascent chains for proteasomal degradation. Mediates ubiquitination of proteins derived from mRNAs lacking stop codons (non-stop proteins) and other translation arrest products induced by poly-lysine sequences and tandem rare codons. Ubiquitination leads to cdc48 recruitment for extraction and degradation of the incomplete translation product. May indirectly play a role in chromatin function and transcription. The protein is E3 ubiquitin-protein ligase listerin of Schizosaccharomyces pombe (strain 972 / ATCC 24843) (Fission yeast).